A 244-amino-acid chain; its full sequence is uncharacterized protein (244 aa).

The WGR domain maps to 1–78 (MKKRFIYHDE…PKFNFMDRYY (78 aa)).

This is an uncharacterized protein from Escherichia coli (strain K12).